The following is a 134-amino-acid chain: Large-conductance mechanosensitive channel (134 aa).

2 consecutive transmembrane segments (helical) span residues 15–35 (IDLA…QSVV) and 80–100 (GNFI…FLAV).

This sequence belongs to the MscL family. As to quaternary structure, homopentamer.

The protein localises to the cell inner membrane. Channel that opens in response to stretch forces in the membrane lipid bilayer. May participate in the regulation of osmotic pressure changes within the cell. The sequence is that of Large-conductance mechanosensitive channel from Methylocella silvestris (strain DSM 15510 / CIP 108128 / LMG 27833 / NCIMB 13906 / BL2).